Here is a 185-residue protein sequence, read N- to C-terminus: UPF0397 protein lhv_0999 (185 aa).

A run of 5 helical transmembrane segments spans residues 11-31 (VVAMGIGSAIYVILTRFTSIP), 45-65 (FLALFAAIYGAKVGFAVGFIG), 72-92 (IMYGQTWWSWVLATGVLGLII), 111-131 (ILLFNIVQIFANIIAWIVVAP), and 145-165 (VFVQGISATLSNGITILVVGT).

Belongs to the UPF0397 family.

It localises to the cell membrane. This chain is UPF0397 protein lhv_0999, found in Lactobacillus helveticus (strain DPC 4571).